Here is a 447-residue protein sequence, read N- to C-terminus: Elongation factor 1-alpha (447 aa).

The tr-type G domain occupies 5-230 (KVHINIVVIG…DNINEPKRPS (226 aa)). The segment at 14-21 (GHVDSGKS) is G1. 14-21 (GHVDSGKS) serves as a coordination point for GTP. Lys55 carries the post-translational modification N6,N6-dimethyllysine. Positions 70-74 (GITID) are G2. An N6,N6,N6-trimethyllysine modification is found at Lys79. The tract at residues 91-94 (DAPG) is G3. GTP contacts are provided by residues 91–95 (DAPGH) and 153–156 (NKMD). The tract at residues 153–156 (NKMD) is G4. The residue at position 187 (Lys187) is an N6,N6,N6-trimethyllysine. The interval 194–196 (SGF) is G5. Lys261 is subject to N6-methyllysine. Glu289 is modified (5-glutamyl glycerylphosphorylethanolamine). Lys306 is modified (N6,N6,N6-trimethyllysine). Glu362 carries the post-translational modification 5-glutamyl glycerylphosphorylethanolamine. An N6,N6,N6-trimethyllysine modification is found at Lys396.

This sequence belongs to the TRAFAC class translation factor GTPase superfamily. Classic translation factor GTPase family. EF-Tu/EF-1A subfamily.

The protein localises to the cytoplasm. Its function is as follows. This protein promotes the GTP-dependent binding of aminoacyl-tRNA to the A-site of ribosomes during protein biosynthesis. In Pisum sativum (Garden pea), this protein is Elongation factor 1-alpha.